Here is a 196-residue protein sequence, read N- to C-terminus: Neuropeptide prohormone-4 (196 aa).

Positions 1 to 25 are cleaved as a signal peptide; it reads MSSPLRMDVTFLLAAIAVTWVCGLK. Residues 50–90 form the LDL-receptor class A domain; it reads DCDIASPFKCEESPTCLRLFQVCNGRWDCEHGSDEDNALCA. Cystine bridges form between cysteine 51–cysteine 65, cysteine 59–cysteine 78, and cysteine 72–cysteine 89.

Expressed by the venom duct.

The protein localises to the secreted. The polypeptide is Neuropeptide prohormone-4 (Conus victoriae (Queen Victoria cone)).